Consider the following 797-residue polypeptide: MKLNQFARLTPDIDQQLKELARIGLPADPQAPFADTAAAMYAAFFPEAYQPAAQQDKFAQVAVNSHQNLAEWLATKPTHMKRADFYNVALQLLGFEAFSDFDLSDPISFMTVTKLPSVAHDLLHTADLLQASYLLLTTRTKHLVSFLDDLANRGFFKDFQAQSSQPAHLLFNGKVQQVFDARQAVREVVWIESDVDSDHDGQRDLLEATIYRPKATDRGLKVPVLFTANPYFHGTNDVTAATHVPETVLAVKPHGASKAEVTAAPASKPKLPARPVTGETKQAAAYAEENSPYAFNDYFLARGFAVVYSAGVGTRYSDGFRTIGGPEETDGAVAVIEWLTGKRRAFTNRTDGVAIKAWWSSGKVAMTGKSYLATLAIAGATTGVEGLKTIVADAGISSWYDYYRENGLVVAPGGYQGEDADVLAVDTFSRQKSGGDMIRLKKAWEQHLAQMTRDQDRTTGAYTAWWDARNYRKNAANVKADVVLIHGLNDWNVKPKNAIRFWQAIADLPIQKKLILHQGQHVYVHNVRSLDFLDMMNLWLTHELLGVANQAEQVLPNVLVQDNVTPQTWSAYSDFANPAAEHVTTTANLKTDFESATDQFSDHATATFTAQHDTSASFEKAIITPNSAYVNSRLWLTQPVLEHDRVLEGIPHLELTLAVDAPTGILSVRLVDLGKAKRFEENAATVGASGLQLGFDFKTTDIVEFKPANKETPSKLITLGHINLQNPKNAYEVQTITPGQFFHVSLDLQPTHYHLPAGRQLALIIHGADMAQTIRPTKVTHYQLDLAKSTLTLPFRI.

Catalysis depends on charge relay system residues serine 370, aspartate 490, and histidine 521.

Belongs to the peptidase S15 family. As to quaternary structure, homodimer.

Its subcellular location is the cytoplasm. It catalyses the reaction Hydrolyzes Xaa-Pro-|- bonds to release unblocked, N-terminal dipeptides from substrates including Ala-Pro-|-p-nitroanilide and (sequentially) Tyr-Pro-|-Phe-Pro-|-Gly-Pro-|-Ile.. In terms of biological role, removes N-terminal dipeptides sequentially from polypeptides having unsubstituted N-termini provided that the penultimate residue is proline. The protein is Xaa-Pro dipeptidyl-peptidase of Lacticaseibacillus rhamnosus (Lactobacillus rhamnosus).